A 280-amino-acid polypeptide reads, in one-letter code: DegV domain-containing protein M6_Spy1440 (280 aa).

In terms of domain architecture, DegV spans 3–280 (WKIVTDSGCD…DGGLLMGYEI (278 aa)). Hexadecanoate-binding residues include S63 and S91.

Its function is as follows. May bind long-chain fatty acids, such as palmitate, and may play a role in lipid transport or fatty acid metabolism. In Streptococcus pyogenes serotype M6 (strain ATCC BAA-946 / MGAS10394), this protein is DegV domain-containing protein M6_Spy1440.